Consider the following 208-residue polypeptide: Uracil phosphoribosyltransferase (208 aa).

5-phospho-alpha-D-ribose 1-diphosphate is bound by residues Arg-78, Arg-103, and 130 to 138 (DPMLATGGS). Residues Ile-193 and 198-200 (GDA) each bind uracil. A 5-phospho-alpha-D-ribose 1-diphosphate-binding site is contributed by Asp-199.

The protein belongs to the UPRTase family. The cofactor is Mg(2+).

The catalysed reaction is UMP + diphosphate = 5-phospho-alpha-D-ribose 1-diphosphate + uracil. The protein operates within pyrimidine metabolism; UMP biosynthesis via salvage pathway; UMP from uracil: step 1/1. Its activity is regulated as follows. Allosterically activated by GTP. In terms of biological role, catalyzes the conversion of uracil and 5-phospho-alpha-D-ribose 1-diphosphate (PRPP) to UMP and diphosphate. This chain is Uracil phosphoribosyltransferase, found in Photorhabdus laumondii subsp. laumondii (strain DSM 15139 / CIP 105565 / TT01) (Photorhabdus luminescens subsp. laumondii).